The sequence spans 294 residues: Very long chain fatty acid elongase 5 (294 aa).

The next 7 membrane-spanning stretches (helical) occupy residues 26–46 (WLLL…LLIV), 64–84 (ILVV…YELV), 112–132 (VLWW…FFIL), 141–161 (FLHI…MNWV), 172–192 (FNSF…IPAI), 207–227 (LVQF…PCGF), and 231–251 (WLYF…NFYI). The segment at 261–294 (AKKDPRHNGIKSVNGHSNGASHTNAVKNRKARTD) is disordered. A compositionally biased stretch (polar residues) spans 274-286 (NGHSNGASHTNAV).

Belongs to the ELO family. ELOVL5 subfamily. As to expression, expression is highest in intestine, followed by brain and heart, and lowest in gill. Also expressed in liver, spleen and muscle.

The protein resides in the endoplasmic reticulum membrane. It is found in the cell projection. It localises to the dendrite. The catalysed reaction is a very-long-chain acyl-CoA + malonyl-CoA + H(+) = a very-long-chain 3-oxoacyl-CoA + CO2 + CoA. The enzyme catalyses (6Z,9Z,12Z)-octadecatrienoyl-CoA + malonyl-CoA + H(+) = (8Z,11Z,14Z)-3-oxoeicosatrienoyl-CoA + CO2 + CoA. It catalyses the reaction (9Z,12Z,15Z)-octadecatrienoyl-CoA + malonyl-CoA + H(+) = (11Z,14Z,17Z)-3-oxoeicosatrienoyl-CoA + CO2 + CoA. It carries out the reaction (9Z)-hexadecenoyl-CoA + malonyl-CoA + H(+) = 3-oxo-(11Z)-octadecenoyl-CoA + CO2 + CoA. The catalysed reaction is (9Z)-octadecenoyl-CoA + malonyl-CoA + H(+) = 3-oxo-(11Z)-eicosenoyl-CoA + CO2 + CoA. The enzyme catalyses (11Z)-octadecenoyl-CoA + malonyl-CoA + H(+) = 3-oxo-(13Z)-eicosenoyl-CoA + CO2 + CoA. It catalyses the reaction (9Z,12Z)-octadecadienoyl-CoA + malonyl-CoA + H(+) = (11Z,14Z)-3-oxoicosa-11,14-dienoyl-CoA + CO2 + CoA. It carries out the reaction (6Z,9Z,12Z,15Z)-octadecatetraenoyl-CoA + malonyl-CoA + H(+) = (8Z,11Z,14Z,17Z)-3-oxoicosatetraenoyl-CoA + CO2 + CoA. The catalysed reaction is (5Z,8Z,11Z,14Z)-eicosatetraenoyl-CoA + malonyl-CoA + H(+) = (7Z,10Z,13Z,16Z)-3-oxodocosatetraenoyl-CoA + CO2 + CoA. The enzyme catalyses (5Z,8Z,11Z,14Z,17Z)-eicosapentaenoyl-CoA + malonyl-CoA + H(+) = 3-oxo-(7Z,10Z,13Z,16Z,19Z)-docosapentaenoyl-CoA + CO2 + CoA. It participates in lipid metabolism; polyunsaturated fatty acid biosynthesis. Catalyzes the first and rate-limiting reaction of the four reactions that constitute the long-chain fatty acids elongation cycle. This endoplasmic reticulum-bound enzymatic process allows the addition of 2 carbons to the chain of long- and very long-chain fatty acids (VLCFAs) per cycle. Condensing enzyme that acts specifically toward polyunsaturated acyl-CoA with the higher activity toward C18:3(n-6) acyl-CoA. May participate in the production of monounsaturated and of polyunsaturated VLCFAs of different chain lengths that are involved in multiple biological processes as precursors of membrane lipids and lipid mediators. In conditions where the essential linoleic and alpha linoleic fatty acids are lacking it is also involved in the synthesis of Mead acid from oleic acid. The sequence is that of Very long chain fatty acid elongase 5 from Tachysurus fulvidraco (Yellow catfish).